We begin with the raw amino-acid sequence, 428 residues long: Flotillin-2 (428 aa).

Gly2 is lipidated: N-myristoyl glycine. Cys4 is lipidated: S-palmitoyl cysteine; by ZDHHC5. Residue Cys19 is the site of S-palmitoyl cysteine attachment. Cys20 carries the S-palmitoyl cysteine; by ZDHHC5 lipid modification. Position 405 is a phosphoserine (Ser405).

The protein belongs to the band 7/mec-2 family. Flotillin subfamily. In terms of assembly, heterooligomeric complex of flotillin-1 and flotillin-2 and caveolin-1 and caveolin-2. Interacts with ECPAS. In terms of processing, ZDHHC5-catalyzed palmitoylation may be required for the formation of higher-order complexes and for neurite outgrowth in cultured neural stem cells. In terms of tissue distribution, expressed in many tissues, including suprabasal epidermis, hair follicles, heart, lung, thymus, spleen, liver, kidney and brain. Not expressed in skeletal muscle.

It is found in the cell membrane. Its subcellular location is the membrane. It localises to the caveola. The protein resides in the endosome. In terms of biological role, may act as a scaffolding protein within caveolar membranes, functionally participating in formation of caveolae or caveolae-like vesicles. May be involved in epidermal cell adhesion and epidermal structure and function. The chain is Flotillin-2 (Flot2) from Mus musculus (Mouse).